We begin with the raw amino-acid sequence, 242 residues long: Caffeoyl-CoA O-methyltransferase 2 (242 aa).

Lys-16 is a substrate binding site. S-adenosyl-L-methionine contacts are provided by residues Thr-58, Glu-80, 82 to 83 (GV), Ser-88, Asp-106, and Ala-135. Residue Asp-158 coordinates substrate. Residue Asp-158 coordinates a divalent metal cation. Asp-160 is an S-adenosyl-L-methionine binding site. A divalent metal cation is bound by residues Asp-184 and Asn-185. A substrate-binding site is contributed by Asn-189.

This sequence belongs to the class I-like SAM-binding methyltransferase superfamily. Cation-dependent O-methyltransferase family. CCoAMT subfamily. The cofactor is Mg(2+). As to expression, mostly expressed in the bottom and middle parts of the stems.

The catalysed reaction is (E)-caffeoyl-CoA + S-adenosyl-L-methionine = (E)-feruloyl-CoA + S-adenosyl-L-homocysteine + H(+). Its pathway is aromatic compound metabolism; phenylpropanoid biosynthesis. Methylates caffeoyl-CoA to feruloyl-CoA and 5-hydroxyferuloyl-CoA to sinapoyl-CoA. Plays a role in the synthesis of feruloylated polysaccharides. Involved in the reinforcement of the plant cell wall. Also involved in the responding to wounding or pathogen challenge by the increased formation of cell wall-bound ferulic acid polymers. Methylates 5-hydroxyferulolyl-CoA more efficiently than caffeoyl-CoA. The chain is Caffeoyl-CoA O-methyltransferase 2 (CCOAOMT2) from Nicotiana tabacum (Common tobacco).